We begin with the raw amino-acid sequence, 417 residues long: 3-isopropylmalate dehydratase large subunit (417 aa).

Positions 298, 358, and 361 each coordinate [4Fe-4S] cluster.

This sequence belongs to the aconitase/IPM isomerase family. LeuC type 2 subfamily. As to quaternary structure, heterodimer of LeuC and LeuD. It depends on [4Fe-4S] cluster as a cofactor.

The catalysed reaction is (2R,3S)-3-isopropylmalate = (2S)-2-isopropylmalate. It functions in the pathway amino-acid biosynthesis; L-leucine biosynthesis; L-leucine from 3-methyl-2-oxobutanoate: step 2/4. Its function is as follows. Catalyzes the isomerization between 2-isopropylmalate and 3-isopropylmalate, via the formation of 2-isopropylmaleate. This chain is 3-isopropylmalate dehydratase large subunit, found in Thermoanaerobacter pseudethanolicus (strain ATCC 33223 / 39E) (Clostridium thermohydrosulfuricum).